Reading from the N-terminus, the 278-residue chain is Energy-coupling factor transporter ATP-binding protein EcfA (278 aa).

In terms of domain architecture, ABC transporter spans 5–240; that stretch reads LETKNLVYNY…KEVIDEADLR (236 aa). ATP is bound at residue 38–45; sequence GHNGAGKS.

The protein belongs to the ABC transporter superfamily. Energy-coupling factor EcfA family. Forms a stable energy-coupling factor (ECF) transporter complex composed of 2 membrane-embedded substrate-binding proteins (S component), 2 ATP-binding proteins (A component) and 2 transmembrane proteins (T component).

The protein resides in the cell membrane. Its function is as follows. ATP-binding (A) component of a common energy-coupling factor (ECF) ABC-transporter complex. Unlike classic ABC transporters this ECF transporter provides the energy necessary to transport a number of different substrates. This chain is Energy-coupling factor transporter ATP-binding protein EcfA, found in Methanosphaera stadtmanae (strain ATCC 43021 / DSM 3091 / JCM 11832 / MCB-3).